A 388-amino-acid chain; its full sequence is Chorismate synthase (388 aa).

NADP(+) is bound by residues Arg-39 and Arg-45. Residues 95–118 form a disordered region; the sequence is EKNEKSRRVSRPRPGHADLVGGMK. Residues 130–132, 251–252, Gly-296, 311–315, and Arg-337 contribute to the FMN site; these read RSS, NA, and KPIPT.

It belongs to the chorismate synthase family. As to quaternary structure, homotetramer. It depends on FMNH2 as a cofactor.

The enzyme catalyses 5-O-(1-carboxyvinyl)-3-phosphoshikimate = chorismate + phosphate. It functions in the pathway metabolic intermediate biosynthesis; chorismate biosynthesis; chorismate from D-erythrose 4-phosphate and phosphoenolpyruvate: step 7/7. Its function is as follows. Catalyzes the anti-1,4-elimination of the C-3 phosphate and the C-6 proR hydrogen from 5-enolpyruvylshikimate-3-phosphate (EPSP) to yield chorismate, which is the branch point compound that serves as the starting substrate for the three terminal pathways of aromatic amino acid biosynthesis. This reaction introduces a second double bond into the aromatic ring system. The sequence is that of Chorismate synthase from Listeria monocytogenes serotype 4b (strain CLIP80459).